The chain runs to 945 residues: Leucine--tRNA ligase 1 (945 aa).

The short motif at proline 42–histidine 52 is the 'HIGH' region element. The 'KMSKS' region motif lies at lysine 625–serine 629. ATP is bound at residue lysine 628.

It belongs to the class-I aminoacyl-tRNA synthetase family.

The protein localises to the cytoplasm. It catalyses the reaction tRNA(Leu) + L-leucine + ATP = L-leucyl-tRNA(Leu) + AMP + diphosphate. This Sulfurisphaera tokodaii (strain DSM 16993 / JCM 10545 / NBRC 100140 / 7) (Sulfolobus tokodaii) protein is Leucine--tRNA ligase 1.